The sequence spans 234 residues: Large ribosomal subunit protein uL1 (234 aa).

Belongs to the universal ribosomal protein uL1 family. In terms of assembly, part of the 50S ribosomal subunit.

Binds directly to 23S rRNA. The L1 stalk is quite mobile in the ribosome, and is involved in E site tRNA release. In terms of biological role, protein L1 is also a translational repressor protein, it controls the translation of the L11 operon by binding to its mRNA. The polypeptide is Large ribosomal subunit protein uL1 (Pectobacterium carotovorum subsp. carotovorum (strain PC1)).